The chain runs to 177 residues: Putative rubredoxin (177 aa).

The Rubredoxin-like domain occupies 1–38; it reads MKICRICGYQIPEGEFNLLEDGWVCPRCGVGKEELQDS. The Fe cation site is built by C4, C7, C25, and C28.

It belongs to the rubredoxin family. It depends on Fe(3+) as a cofactor.

This is Putative rubredoxin (rdxA) from Methanothermobacter thermautotrophicus (strain ATCC 29096 / DSM 1053 / JCM 10044 / NBRC 100330 / Delta H) (Methanobacterium thermoautotrophicum).